The primary structure comprises 262 residues: 5'-nucleotidase SurE (262 aa).

The a divalent metal cation site is built by aspartate 11, aspartate 12, serine 43, and asparagine 101. Positions 220–229 (SAGDGPKEWP) are enriched in basic and acidic residues. Residues 220–246 (SAGDGPKEWPSDVSQIETNSPSLTPIQ) are disordered. Over residues 231–244 (DVSQIETNSPSLTP) the composition is skewed to polar residues.

This sequence belongs to the SurE nucleotidase family. A divalent metal cation serves as cofactor.

It localises to the cytoplasm. It carries out the reaction a ribonucleoside 5'-phosphate + H2O = a ribonucleoside + phosphate. Its function is as follows. Nucleotidase that shows phosphatase activity on nucleoside 5'-monophosphates. The polypeptide is 5'-nucleotidase SurE (Prochlorococcus marinus (strain SARG / CCMP1375 / SS120)).